Here is a 62-residue protein sequence, read N- to C-terminus: Small ribosomal subunit protein eS31 (62 aa).

4 residues coordinate Zn(2+): cysteine 29, cysteine 32, cysteine 48, and cysteine 51. Residues 29–51 (CPRCGSFMAFHKWPVPRWHCGKC) form a C4-type zinc finger.

The protein belongs to the eukaryotic ribosomal protein eS31 family. In terms of assembly, part of the 30S ribosomal subunit. Requires Zn(2+) as cofactor.

This is Small ribosomal subunit protein eS31 from Hyperthermus butylicus (strain DSM 5456 / JCM 9403 / PLM1-5).